Reading from the N-terminus, the 365-residue chain is 1-aminocyclopropane-1-carboxylate oxidase homolog 9 (365 aa).

Residues 214–313 (KGLLMLCHYY…RISVACFVSS (100 aa)) form the Fe2OG dioxygenase domain. The Fe cation site is built by His238, Asp240, and His294. Arg304 serves as a coordination point for 2-oxoglutarate.

Belongs to the iron/ascorbate-dependent oxidoreductase family. It depends on Fe(2+) as a cofactor.

In Arabidopsis thaliana (Mouse-ear cress), this protein is 1-aminocyclopropane-1-carboxylate oxidase homolog 9.